The sequence spans 243 residues: Ras-related protein Rab-12 (243 aa).

The residue at position 1 (methionine 1) is an N-acetylmethionine. The disordered stretch occupies residues 1-36 (MDPSAALHRRPAGGGLGAVSPALSGGQARRRKQPPR). A phosphoserine mark is found at serine 20 and serine 24. 7 residues coordinate GTP: glycine 51, valine 52, glycine 53, lysine 54, threonine 55, serine 72, and threonine 73. Residue threonine 55 coordinates Mg(2+). Short sequence motifs (switch) lie at residues 64 to 78 (DTFC…GVDF) and 96 to 113 (DTAG…YYRS). Mg(2+) is bound by residues threonine 73 and aspartate 96. GTP is bound at residue glycine 99. Serine 105 carries the phosphoserine modification. 6 residues coordinate GTP: asparagine 154, lysine 155, aspartate 157, serine 185, alanine 186, and lysine 187. S-geranylgeranyl cysteine attachment occurs at residues cysteine 242 and cysteine 243.

Belongs to the small GTPase superfamily. Rab family. Interacts with RABIF and OPTN. Interacts with LRRK2; interaction facilitates phosphorylation of Ser-105. Interacts with GDI1, GDI2 and CHM; these interactions are disrupted by phosphorylation on Ser-105. Interacts with RILPL1 and RILPL2; these interactions are dependent on phosphorylation of Ser-105. Requires Mg(2+) as cofactor. Phosphorylation of Ser-105 in the switch II region by LRRK2 prevents the association of RAB regulatory proteins, including CHM and RAB GDP dissociation inhibitors GDI1 and GDI2. As to expression, highest levels in skeletal and cardiac muscle. Also found in comparable amounts in brain, spinal cord and lung. Also detected in testis where it is expressed by Sertoli cells of the seminiferous tubules (at protein level).

Its subcellular location is the recycling endosome membrane. The protein localises to the lysosome membrane. The protein resides in the golgi apparatus membrane. It localises to the cytoplasmic vesicle. It is found in the autophagosome. The enzyme catalyses GTP + H2O = GDP + phosphate + H(+). Its activity is regulated as follows. Regulated by guanine nucleotide exchange factors (GEFs) including DENND3 which promote the exchange of bound GDP for free GTP. Regulated by GTPase activating proteins (GAPs) which increase the GTP hydrolysis activity. Inhibited by GDP dissociation inhibitors (GDIs). Its function is as follows. The small GTPases Rab are key regulators of intracellular membrane trafficking, from the formation of transport vesicles to their fusion with membranes. Rabs cycle between an inactive GDP-bound form and an active GTP-bound form that is able to recruit to membranes different sets of downstream effectors directly responsible for vesicle formation, movement, tethering and fusion. RAB12 may play a role in protein transport from recycling endosomes to lysosomes regulating, for instance, the degradation of the transferrin receptor. Involved in autophagy. This chain is Ras-related protein Rab-12, found in Rattus norvegicus (Rat).